We begin with the raw amino-acid sequence, 1067 residues long: Kinesin-like protein KIF11-B (1067 aa).

The Kinesin motor domain maps to 18–359; sequence NIQVVVRCRP…LDYANRAKSI (342 aa). Residue 105 to 112 participates in ATP binding; that stretch reads GQTGTGKT. Residues 365 to 480 adopt a coiled-coil conformation; it reads VNQKLTKKAL…SKEQLAQESF (116 aa). The residue at position 937 (Thr937) is a Phosphothreonine; by CDK1. Residue Ser1046 is modified to Phosphoserine; by NEK6.

It belongs to the TRAFAC class myosin-kinesin ATPase superfamily. Kinesin family. BimC subfamily. As to quaternary structure, heterotetramer of two heavy and two light chains. Interacts with aurka. In terms of processing, phosphorylation of Thr-937 during mitosis controls the association of this protein with the spindle apparatus. A subset of this protein primarily localized at the spindle pole is phosphorylated by NEK6 during mitosis. Post-translationally, phosphorylated on a serine residue by aurka. In unfertilized eggs, shows highest expression in the germinal vesicle and radial yolk-poor channels. Also present in testis.

The protein resides in the cytoplasm. The protein localises to the cytoskeleton. Its subcellular location is the spindle pole. In terms of biological role, plus end-directed motor protein required for establishing a bipolar spindle. Associates with both interphase and spindle microtubules. May be involved in nuclear divisions taking place during the development of unfertilized eggs. Required in non-mitotic cells for transport of secretory proteins from the Golgi complex to the cell surface. In Xenopus laevis (African clawed frog), this protein is Kinesin-like protein KIF11-B (kif11-b).